Reading from the N-terminus, the 421-residue chain is Trimethyllysine dioxygenase, mitochondrial (421 aa).

The N-terminal 15 residues, 1 to 15, are a transit peptide targeting the mitochondrion; that stretch reads MWCHRLSHLQSRLQD. The residue at position 236 (Lys-236) is an N6-acetyllysine. Fe cation-binding residues include His-242, Asp-244, and His-389.

Belongs to the gamma-BBH/TMLD family. Homodimer. The cofactor is Fe(2+). Requires L-ascorbate as cofactor.

The protein resides in the mitochondrion matrix. The catalysed reaction is N(6),N(6),N(6)-trimethyl-L-lysine + 2-oxoglutarate + O2 = (3S)-3-hydroxy-N(6),N(6),N(6)-trimethyl-L-lysine + succinate + CO2. It functions in the pathway amine and polyamine biosynthesis; carnitine biosynthesis. Converts trimethyllysine (TML) into hydroxytrimethyllysine (HTML). The chain is Trimethyllysine dioxygenase, mitochondrial (TMLHE) from Bos taurus (Bovine).